A 468-amino-acid polypeptide reads, in one-letter code: Anthocyanidin 3-O-glucoside 2'''-O-xylosyltransferase (468 aa).

UDP-alpha-D-xylose-binding positions include S284, 344-346 (IQQ), 361-369 (HCGFGSMWE), and 383-386 (HGEQ).

Belongs to the UDP-glycosyltransferase family.

It carries out the reaction an anthocyanidin 3-O-beta-D-glucoside + UDP-alpha-D-xylose = an anthocyanidin 3-O-beta-D-sambubioside + UDP + 2 H(+). It functions in the pathway secondary metabolite biosynthesis; flavonoid biosynthesis. Contributes to the last few anthocyanin biosynthetic steps. Converts cyanidin 3-O-glucoside to cyanidin 3-O-xylosyl(1-&gt;2)glucoside. Can use 3-O-glucosylated anthocyanidins/flavonols and uridine diphosphate (UDP)-xylose as substrates. This chain is Anthocyanidin 3-O-glucoside 2'''-O-xylosyltransferase (A3G2XYLT), found in Arabidopsis thaliana (Mouse-ear cress).